The sequence spans 122 residues: Large ribosomal subunit protein bL12 (122 aa).

The protein belongs to the bacterial ribosomal protein bL12 family. In terms of assembly, homodimer. Part of the ribosomal stalk of the 50S ribosomal subunit. Forms a multimeric L10(L12)X complex, where L10 forms an elongated spine to which 2 to 4 L12 dimers bind in a sequential fashion. Binds GTP-bound translation factors.

Forms part of the ribosomal stalk which helps the ribosome interact with GTP-bound translation factors. Is thus essential for accurate translation. The protein is Large ribosomal subunit protein bL12 of Mycoplasma capricolum subsp. capricolum (strain California kid / ATCC 27343 / NCTC 10154).